The sequence spans 282 residues: MFFIEIIKSVIFGIIEGITEWLPISSTGHLILVQEFIHYQKQNAAFMEMFNVVIQLGAILAVVFIYFDKLNPFKPDKTPRQVQKTWQLWAKVVVASLPAVIIGIPLDNWFEKNFHNFVSVAIMLIIYGIAFILIERRNQEVEPTVTNLEKLPYKTALYIGFFQVLSLFPGTSRSGATIVGGLLNGTSRSVVTEFTFFLGIPVMFGASGIKVLKFILKGNSLDLGQLTLLLVAMIVAFGVSMYVIRFLTDYVKKHDFTVFGKYRIGLGALLLIYWVFKALFAK.

7 consecutive transmembrane segments (helical) span residues 45–65 (AFMEMFNVVIQLGAILAVVFI), 86–106 (WQLWAKVVVASLPAVIIGIPL), 114–134 (FHNFVSVAIMLIIYGIAFILI), 151–171 (LPYKTALYIGFFQVLSLFPGT), 196–216 (FFLGIPVMFGASGIKVLKFIL), 224–244 (GQLTLLLVAMIVAFGVSMYVI), and 256–276 (FTVFGKYRIGLGALLLIYWVF).

Belongs to the UppP family.

Its subcellular location is the cell membrane. The enzyme catalyses di-trans,octa-cis-undecaprenyl diphosphate + H2O = di-trans,octa-cis-undecaprenyl phosphate + phosphate + H(+). In terms of biological role, catalyzes the dephosphorylation of undecaprenyl diphosphate (UPP). Confers resistance to bacitracin. The chain is Undecaprenyl-diphosphatase from Streptococcus gordonii (strain Challis / ATCC 35105 / BCRC 15272 / CH1 / DL1 / V288).